Consider the following 408-residue polypeptide: Putative ankyrin repeat protein L483 (408 aa).

ANK repeat units follow at residues 78–107, 108–137, 139–167, 168–197, 198–227, 229–257, 259–287, 288–317, 318–347, 349–377, and 378–407; these read SLNK…DIKA, GDDC…NIRA, NDYA…DIRA, NNDY…NIRT, ENDY…DIRA, NDYA…NIRV, NDYA…NIRA, RCDF…DIRS, QNDY…DIRT, DDYA…NIRA, and KDDY…VLTK.

This is Putative ankyrin repeat protein L483 from Acanthamoeba polyphaga (Amoeba).